Reading from the N-terminus, the 167-residue chain is SsrA-binding protein (167 aa).

The interval 139–167 (QAHDKRHAEKEREWQRDKQRIMRAHNRNA) is disordered. Over residues 144–158 (RHAEKEREWQRDKQR) the composition is skewed to basic and acidic residues.

It belongs to the SmpB family.

The protein localises to the cytoplasm. Its function is as follows. Required for rescue of stalled ribosomes mediated by trans-translation. Binds to transfer-messenger RNA (tmRNA), required for stable association of tmRNA with ribosomes. tmRNA and SmpB together mimic tRNA shape, replacing the anticodon stem-loop with SmpB. tmRNA is encoded by the ssrA gene; the 2 termini fold to resemble tRNA(Ala) and it encodes a 'tag peptide', a short internal open reading frame. During trans-translation Ala-aminoacylated tmRNA acts like a tRNA, entering the A-site of stalled ribosomes, displacing the stalled mRNA. The ribosome then switches to translate the ORF on the tmRNA; the nascent peptide is terminated with the 'tag peptide' encoded by the tmRNA and targeted for degradation. The ribosome is freed to recommence translation, which seems to be the essential function of trans-translation. This is SsrA-binding protein from Xylella fastidiosa (strain M23).